The primary structure comprises 259 residues: MDPAQKRAAFNALAVAARDQHSPSDAKRIAKRDQMLGYVRGPWEQLEDDDSTRYDTLKQAMDDAMSKILSQAQVVHRTKHLDKLLDSGRISSLFEVGFSAGGDTPGQRALYEEAWFGKGHVPPVYSALEFDGVKPKGMSMYGSTKLYLKPEVRDRVTVTIGDSLMSSDSVFPGKPGDGLGLRANPNAIKNLVDPNKSREENMQAIYESFKKYAESNFIESQIHDGVILEDIEKVVFTQPPSSFLTDKLDKLGIPWEVES.

The polypeptide is Gene 2 protein (2) (Mycobacterium (Mycobacteriophage D29)).